A 132-amino-acid polypeptide reads, in one-letter code: Phosphoribosyl-AMP cyclohydrolase (132 aa).

Asp-79 serves as a coordination point for Mg(2+). Residue Cys-80 participates in Zn(2+) binding. Asp-81 and Asp-83 together coordinate Mg(2+). Positions 100 and 107 each coordinate Zn(2+).

Belongs to the PRA-CH family. In terms of assembly, homodimer. The cofactor is Mg(2+). Zn(2+) serves as cofactor.

The protein localises to the cytoplasm. The enzyme catalyses 1-(5-phospho-beta-D-ribosyl)-5'-AMP + H2O = 1-(5-phospho-beta-D-ribosyl)-5-[(5-phospho-beta-D-ribosylamino)methylideneamino]imidazole-4-carboxamide. It participates in amino-acid biosynthesis; L-histidine biosynthesis; L-histidine from 5-phospho-alpha-D-ribose 1-diphosphate: step 3/9. Its function is as follows. Catalyzes the hydrolysis of the adenine ring of phosphoribosyl-AMP. The chain is Phosphoribosyl-AMP cyclohydrolase from Acidovorax sp. (strain JS42).